A 340-amino-acid polypeptide reads, in one-letter code: Protein-arginine kinase (340 aa).

The Phosphagen kinase C-terminal domain occupies 21-242 (VVLSSRIRLA…EQIIMQERIA (222 aa)). ATP is bound by residues 24-28 (SSRIR), H79, R113, 164-168 (RASVM), and 195-200 (RGIYGE).

This sequence belongs to the ATP:guanido phosphotransferase family.

The enzyme catalyses L-arginyl-[protein] + ATP = N(omega)-phospho-L-arginyl-[protein] + ADP + H(+). Functionally, catalyzes the specific phosphorylation of arginine residues in proteins. The sequence is that of Protein-arginine kinase from Listeria monocytogenes serotype 4a (strain HCC23).